We begin with the raw amino-acid sequence, 448 residues long: MGLSPVNIFKPFGLGRAKAVIAAVSGGSDSLGLLFLLKDYLSTLESPPVLIAVTVDHKLRAESALEAENVGLLCQKHGIMHCVLSWDDPKPAHGLAAAARTARYRLLVQAARDAGAGFIVTGHTENDQIETFLMRKARSGHCEARGLAAMSPRSLLEGSVELARPLLTVSRQALRDELTRRGIAWVDDPSNANIDYERPRVRLGVAAEADGQEVLEQIAQAGAARERNNAALVEALADPATLGVDAAGMMFLNADCYAALSPGARQLFSGLLASIAGGRRFLPGDGERRRIERMLSGQDAPRRLTVFGALIERGEKGAPHRFRRERRNLPKLDLVPGQHIVWDGRFCFFNSGGRSFEIAPPGRQELIDFLKNSGRDIESRRCEALLISPALYEGGKLAFVPFLPGAEWPQGVHIERHFAIFDHVLPGHDFALAQAVEARLGRACAEIS.

ATP is bound at residue 25-30 (SGGSDS).

This sequence belongs to the tRNA(Ile)-lysidine synthase family.

The protein resides in the cytoplasm. It catalyses the reaction cytidine(34) in tRNA(Ile2) + L-lysine + ATP = lysidine(34) in tRNA(Ile2) + AMP + diphosphate + H(+). Ligates lysine onto the cytidine present at position 34 of the AUA codon-specific tRNA(Ile) that contains the anticodon CAU, in an ATP-dependent manner. Cytidine is converted to lysidine, thus changing the amino acid specificity of the tRNA from methionine to isoleucine. This chain is tRNA(Ile)-lysidine synthase, found in Brucella melitensis biotype 2 (strain ATCC 23457).